The primary structure comprises 544 residues: Chaperonin GroEL 1 (544 aa).

Residues 29 to 32, 86 to 90, glycine 413, 476 to 478, and aspartate 492 contribute to the ATP site; these read TLGP, DGTTT, and NAA. Residues 523-544 are disordered; that stretch reads EPVKAPAGGGDMDGMGGMGGMM. Positions 529–544 are enriched in gly residues; the sequence is AGGGDMDGMGGMGGMM.

Belongs to the chaperonin (HSP60) family. In terms of assembly, forms a cylinder of 14 subunits composed of two heptameric rings stacked back-to-back. Interacts with the co-chaperonin GroES.

It is found in the cytoplasm. The catalysed reaction is ATP + H2O + a folded polypeptide = ADP + phosphate + an unfolded polypeptide.. Its function is as follows. Together with its co-chaperonin GroES, plays an essential role in assisting protein folding. The GroEL-GroES system forms a nano-cage that allows encapsulation of the non-native substrate proteins and provides a physical environment optimized to promote and accelerate protein folding. This chain is Chaperonin GroEL 1, found in Cutibacterium acnes (strain DSM 16379 / KPA171202) (Propionibacterium acnes).